The sequence spans 161 residues: MTNNEIIAATDGSSLANPGPSGWAWYVDENTWDSGGWDIATNNIAELTAVRELLIATRHTDRPILILSDSKYVINSLTKWVYSWKMRKWRKADGKPVLNQEIIQEIDSLMENRNIRMSWVNAHTGHPLNEAADSLARQAANNFSTRSAHIPGPGWTERSAK.

An RNase H type-1 domain is found at 2–141 (TNNEIIAATD…ADSLARQAAN (140 aa)). Mg(2+)-binding residues include D11, E46, D69, and D133.

Belongs to the RNase H family. In terms of assembly, monomer. Mg(2+) serves as cofactor.

The protein resides in the cytoplasm. It catalyses the reaction Endonucleolytic cleavage to 5'-phosphomonoester.. Endonuclease that specifically degrades the RNA of RNA-DNA hybrids. The sequence is that of Ribonuclease H from Tropheryma whipplei (strain TW08/27) (Whipple's bacillus).